Here is a 593-residue protein sequence, read N- to C-terminus: Myc box-dependent-interacting protein 1 (593 aa).

N-acetylalanine is present on alanine 2. Residues 2–122 form an interaction with BIN2 region; the sequence is AEMGSKGVTA…DYHQKLVDQA (121 aa). Coiled coils occupy residues 15-42 and 193-267; these read ASNV…TKDE and HLVA…NDVL. The BAR domain occupies 29 to 276; it reads VLQKLGKADE…LVGLEKQHGS (248 aa). 2 disordered regions span residues 280-354 and 400-488; these read TVKA…KEVK and PVTS…AASS. A phosphoserine mark is found at serine 296, serine 298, and serine 303. 2 positions are modified to phosphothreonine: threonine 307 and threonine 323. At serine 331 the chain carries Phosphoserine. Residues 378–421 are clathrin-binding; it reads FEAPGPFSEQASLLDLDFDPLPPVTSPVKAPTPSGQSIPWDLWE. One can recognise an SH3 domain in the interval 520–593; sequence GFMFKVQAQH…FPENFTERVP (74 aa).

In terms of assembly, heterodimer with AMPH. Binds SH3GLB1. Interacts (via SH3 domain) with DNM1. Interacts with SYNJ1. Interacts (via SH3 domain) with DNM2. Isoform IIA interacts with CLTC. Isoform IIB does not interact with CLTC. Isoform IIC1 does not interact with CLTC. Isoform IIC2 does not interact with CLTC. Interacts with AP2A2. Interacts with AP2B1. Interacts with MYC (via N-terminal transactivation domain); the interaction requires the integrity of the conserved MYC box regions 1 and 2. Interacts with BIN2. Interacts with SNX4. Interacts (via BAR domain) with BACE1. Binds (via BAR domain) F-actin. As to quaternary structure, (Microbial infection) Interacts (SH3 domain) with HCV NS5A. Phosphorylated by protein kinase C. Ubiquitous. Highest expression in the brain and muscle. Expressed in oligodendrocytes. Isoform IIA is expressed only in the brain, where it is detected in the gray matter, but not in the white matter. Isoform BIN1 is widely expressed with highest expression in skeletal muscle.

The protein resides in the nucleus. It localises to the cytoplasm. It is found in the endosome. Its subcellular location is the cell membrane. The protein localises to the sarcolemma. The protein resides in the T-tubule. Is a key player in the control of plasma membrane curvature, membrane shaping and membrane remodeling. Required in muscle cells for the formation of T-tubules, tubular invaginations of the plasma membrane that function in depolarization-contraction coupling. Is a negative regulator of endocytosis. Is also involved in the regulation of intracellular vesicles sorting, modulation of BACE1 trafficking and the control of amyloid-beta production. In neuronal circuits, endocytosis regulation may influence the internalization of PHF-tau aggregates. May be involved in the regulation of MYC activity and the control cell proliferation. Has actin bundling activity and stabilizes actin filaments against depolymerization in vitro. The sequence is that of Myc box-dependent-interacting protein 1 (BIN1) from Homo sapiens (Human).